The chain runs to 425 residues: Histone-binding protein RBBP4 (425 aa).

Alanine 2 is modified (N-acetylalanine). 7 WD repeats span residues tyrosine 32–glycine 125, glutamate 126–glycine 175, histidine 176–phenylalanine 223, glycine 225–aspartate 270, alanine 271–glutamate 314, serine 315–glycine 371, and glycine 372–methionine 404. The interaction with HAT1 stretch occupies residues aspartate 361–glutamate 406.

It belongs to the WD repeat RBAP46/RBAP48/MSI1 family. In terms of assembly, binds directly to histone H4, probably via helix 1 of the histone fold, a region that is not accessible when histone H4 is in chromatin. Interacts with CHAF1A, HDAC1, HDAC2, HDAC3 and HIRA. May also interact with HAT1.

The protein resides in the nucleus. It is found in the chromosome. It localises to the telomere. Functionally, core histone-binding subunit that may target chromatin assembly factors, chromatin remodeling factors and histone deacetylases to their histone substrates in a manner that is regulated by nucleosomal DNA. Component of several complexes which regulate chromatin metabolism. This chain is Histone-binding protein RBBP4 (RBBP4), found in Gallus gallus (Chicken).